Reading from the N-terminus, the 408-residue chain is LL-diaminopimelate aminotransferase (408 aa).

Residues Tyr-15 and Gly-42 each contribute to the substrate site. Residues Tyr-72, 108–109, Tyr-132, Asn-187, Tyr-218, and 246–248 contribute to the pyridoxal 5'-phosphate site; these read SK and SFS. Residues Lys-109, Tyr-132, and Asn-187 each contribute to the substrate site. Residue Lys-249 is modified to N6-(pyridoxal phosphate)lysine. The pyridoxal 5'-phosphate site is built by Arg-257 and Asn-292. Asn-292 and Arg-388 together coordinate substrate.

The protein belongs to the class-I pyridoxal-phosphate-dependent aminotransferase family. LL-diaminopimelate aminotransferase subfamily. In terms of assembly, homodimer. It depends on pyridoxal 5'-phosphate as a cofactor.

It carries out the reaction (2S,6S)-2,6-diaminopimelate + 2-oxoglutarate = (S)-2,3,4,5-tetrahydrodipicolinate + L-glutamate + H2O + H(+). It functions in the pathway amino-acid biosynthesis; L-lysine biosynthesis via DAP pathway; LL-2,6-diaminopimelate from (S)-tetrahydrodipicolinate (aminotransferase route): step 1/1. Functionally, involved in the synthesis of meso-diaminopimelate (m-DAP or DL-DAP), required for both lysine and peptidoglycan biosynthesis. Catalyzes the direct conversion of tetrahydrodipicolinate to LL-diaminopimelate. This chain is LL-diaminopimelate aminotransferase, found in Prochlorococcus marinus (strain MIT 9211).